The chain runs to 787 residues: Pyridoxal-dependent decarboxylase domain-containing protein 1 (787 aa).

The span at 26 to 44 (MLEKSPRRTEEENGKKPVS) shows a compositional bias: basic and acidic residues. The interval 26–52 (MLEKSPRRTEEENGKKPVSEDIPGPLQ) is disordered. At Ser652 the chain carries Phosphoserine. Residues 682-787 (QGTGVTPPPT…SQVEELERLR (106 aa)) are disordered. Thr687 and Thr691 each carry phosphothreonine. Phosphoserine is present on residues Ser710, Ser718, Ser722, and Ser748. Basic and acidic residues predominate over residues 725–748 (HIEDLEKVEQLSSGLEHDNLEAHS). The span at 759-771 (TARQTEALQNQAQ) shows a compositional bias: polar residues. A compositionally biased stretch (basic and acidic residues) spans 772–787 (HQEDDHSQVEELERLR). The residue at position 778 (Ser778) is a Phosphoserine.

Belongs to the group II decarboxylase family. Pyridoxal 5'-phosphate serves as cofactor.

The polypeptide is Pyridoxal-dependent decarboxylase domain-containing protein 1 (Pdxdc1) (Mus musculus (Mouse)).